Reading from the N-terminus, the 375-residue chain is Queuine tRNA-ribosyltransferase (375 aa).

D89 functions as the Proton acceptor in the catalytic mechanism. Residues 89-93, D143, Q187, and G214 contribute to the substrate site; that span reads DSGGF. Residues 245-251 form an RNA binding region; sequence GVGKPED. The active-site Nucleophile is the D264. Residues 269–273 are RNA binding; important for wobble base 34 recognition; sequence TRNAR. Positions 302, 304, 307, and 333 each coordinate Zn(2+).

This sequence belongs to the queuine tRNA-ribosyltransferase family. Homodimer. Within each dimer, one monomer is responsible for RNA recognition and catalysis, while the other monomer binds to the replacement base PreQ1. Zn(2+) is required as a cofactor.

It carries out the reaction 7-aminomethyl-7-carbaguanine + guanosine(34) in tRNA = 7-aminomethyl-7-carbaguanosine(34) in tRNA + guanine. The protein operates within tRNA modification; tRNA-queuosine biosynthesis. Catalyzes the base-exchange of a guanine (G) residue with the queuine precursor 7-aminomethyl-7-deazaguanine (PreQ1) at position 34 (anticodon wobble position) in tRNAs with GU(N) anticodons (tRNA-Asp, -Asn, -His and -Tyr). Catalysis occurs through a double-displacement mechanism. The nucleophile active site attacks the C1' of nucleotide 34 to detach the guanine base from the RNA, forming a covalent enzyme-RNA intermediate. The proton acceptor active site deprotonates the incoming PreQ1, allowing a nucleophilic attack on the C1' of the ribose to form the product. After dissociation, two additional enzymatic reactions on the tRNA convert PreQ1 to queuine (Q), resulting in the hypermodified nucleoside queuosine (7-(((4,5-cis-dihydroxy-2-cyclopenten-1-yl)amino)methyl)-7-deazaguanosine). This chain is Queuine tRNA-ribosyltransferase, found in Photobacterium profundum (strain SS9).